Here is a 106-residue protein sequence, read N- to C-terminus: Flagellar transcriptional regulator FlhD (106 aa).

It belongs to the FlhD family. In terms of assembly, homodimer; disulfide-linked. Forms a heterohexamer composed of two FlhC and four FlhD subunits. Each FlhC binds a FlhD dimer, forming a heterotrimer, and a hexamer assembles by dimerization of two heterotrimers.

Its subcellular location is the cytoplasm. In terms of biological role, functions in complex with FlhC as a master transcriptional regulator that regulates transcription of several flagellar and non-flagellar operons by binding to their promoter region. Activates expression of class 2 flagellar genes, including fliA, which is a flagellum-specific sigma factor that turns on the class 3 genes. Also regulates genes whose products function in a variety of physiological pathways. The polypeptide is Flagellar transcriptional regulator FlhD (Burkholderia mallei (strain SAVP1)).